Consider the following 330-residue polypeptide: Aspartate--ammonia ligase (330 aa).

This sequence belongs to the class-II aminoacyl-tRNA synthetase family. AsnA subfamily.

It is found in the cytoplasm. The enzyme catalyses L-aspartate + NH4(+) + ATP = L-asparagine + AMP + diphosphate + H(+). Its pathway is amino-acid biosynthesis; L-asparagine biosynthesis; L-asparagine from L-aspartate (ammonia route): step 1/1. The polypeptide is Aspartate--ammonia ligase (Escherichia coli O139:H28 (strain E24377A / ETEC)).